The sequence spans 275 residues: Probable CCR4-associated factor 1 homolog 7 (275 aa).

A divalent metal cation-binding residues include D40, E42, D167, and D236.

It belongs to the CAF1 family. As to quaternary structure, component of the CCR4-NOT complex, at least composed of CRR4 and CAF1 proteins. The cofactor is a divalent metal cation.

The protein localises to the nucleus. The protein resides in the cytoplasm. The catalysed reaction is Exonucleolytic cleavage of poly(A) to 5'-AMP.. Its function is as follows. Ubiquitous transcription factor required for a diverse set of processes. It is a component of the CCR4 complex involved in the control of gene expression. The protein is Probable CCR4-associated factor 1 homolog 7 (CAF1-7) of Arabidopsis thaliana (Mouse-ear cress).